The chain runs to 388 residues: Proline-rich protein 5 (388 aa).

2 interaction with RICTOR regions span residues 10–95 and 188–218; these read MSSP…LTKG and HESRGVTEDYLRLETLVQKVVSPYLGTYGLH. The tract at residues 12–31 is disordered; it reads SPSLSDLGKREPAAAADERG. Residues 18–31 show a composition bias toward basic and acidic residues; it reads LGKREPAAAADERG. The residue at position 252 (serine 252) is a Phosphoserine. The segment at 254-388 is disordered; sequence SYNTPLLNPV…EGSGGRQSVV (135 aa). Positions 336–346 are enriched in polar residues; it reads TRSSLPRSSPE.

This sequence belongs to the PROTOR family. Associated component of the mechanistic target of rapamycin complex 2 (mTORC2). Binds directly to MTOR and RICTOR within the TORC2 complex. In terms of tissue distribution, most abundant in kidney and liver. Also highly expressed in brain, spleen, testis and placenta. Overexpressed in several colorectal tumors.

Associated subunit of mTORC2, which regulates cell growth and survival in response to hormonal signals. mTORC2 is activated by growth factors, but, in contrast to mTORC1, seems to be nutrient-insensitive. mTORC2 seems to function upstream of Rho GTPases to regulate the actin cytoskeleton, probably by activating one or more Rho-type guanine nucleotide exchange factors. PRR5 plays an important role in regulation of PDGFRB expression and in modulation of platelet-derived growth factor signaling. May act as a tumor suppressor in breast cancer. In Homo sapiens (Human), this protein is Proline-rich protein 5 (PRR5).